Consider the following 183-residue polypeptide: Ribosomal RNA small subunit methyltransferase G (183 aa).

Residues Gly60, Phe65, 111–112 (IE), and Arg125 contribute to the S-adenosyl-L-methionine site.

This sequence belongs to the methyltransferase superfamily. RNA methyltransferase RsmG family.

It is found in the cytoplasm. It carries out the reaction guanosine(527) in 16S rRNA + S-adenosyl-L-methionine = N(7)-methylguanosine(527) in 16S rRNA + S-adenosyl-L-homocysteine. Functionally, specifically methylates the N7 position of guanine in position 527 of 16S rRNA. This is Ribosomal RNA small subunit methyltransferase G from Campylobacter hominis (strain ATCC BAA-381 / DSM 21671 / CCUG 45161 / LMG 19568 / NCTC 13146 / CH001A).